Reading from the N-terminus, the 810-residue chain is Lon protease (810 aa).

The Lon N-terminal domain occupies Leu-32–Thr-226. Gly-376 to Thr-383 provides a ligand contact to ATP. The Lon proteolytic domain occupies Lys-612–Glu-791. Catalysis depends on residues Ser-697 and Lys-740.

Belongs to the peptidase S16 family. Homohexamer. Organized in a ring with a central cavity.

The protein localises to the cytoplasm. It carries out the reaction Hydrolysis of proteins in presence of ATP.. Functionally, ATP-dependent serine protease that mediates the selective degradation of mutant and abnormal proteins as well as certain short-lived regulatory proteins. Required for cellular homeostasis and for survival from DNA damage and developmental changes induced by stress. Degrades polypeptides processively to yield small peptide fragments that are 5 to 10 amino acids long. Binds to DNA in a double-stranded, site-specific manner. This is Lon protease from Fervidobacterium nodosum (strain ATCC 35602 / DSM 5306 / Rt17-B1).